The sequence spans 380 residues: Cytochrome b (380 aa).

Helical transmembrane passes span 34 to 54, 78 to 99, 114 to 134, and 179 to 199; these read FGSL…LLAM, WLIR…YLHI, WNTG…GYVL, and FFAL…IHLT. Residues histidine 84 and histidine 98 each coordinate heme b. The heme b site is built by histidine 183 and histidine 197. An a ubiquinone-binding site is contributed by histidine 202. 4 consecutive transmembrane segments (helical) span residues 227–247, 289–309, 321–341, and 348–368; these read IKDI…ALFS, LGGV…PFLH, FSQL…WVGS, and FIII…ILFP.

The protein belongs to the cytochrome b family. The cytochrome bc1 complex contains 11 subunits: 3 respiratory subunits (MT-CYB, CYC1 and UQCRFS1), 2 core proteins (UQCRC1 and UQCRC2) and 6 low-molecular weight proteins (UQCRH/QCR6, UQCRB/QCR7, UQCRQ/QCR8, UQCR10/QCR9, UQCR11/QCR10 and a cleavage product of UQCRFS1). This cytochrome bc1 complex then forms a dimer. It depends on heme b as a cofactor.

It localises to the mitochondrion inner membrane. Component of the ubiquinol-cytochrome c reductase complex (complex III or cytochrome b-c1 complex) that is part of the mitochondrial respiratory chain. The b-c1 complex mediates electron transfer from ubiquinol to cytochrome c. Contributes to the generation of a proton gradient across the mitochondrial membrane that is then used for ATP synthesis. This is Cytochrome b (MT-CYB) from Numida meleagris (Helmeted guineafowl).